Reading from the N-terminus, the 319-residue chain is Ribonuclease Z (319 aa).

Residues His62, His64, Asp66, His67, His145, Asp215, and His273 each coordinate Zn(2+). The active-site Proton acceptor is the Asp66.

It belongs to the RNase Z family. In terms of assembly, homodimer. Requires Zn(2+) as cofactor.

It carries out the reaction Endonucleolytic cleavage of RNA, removing extra 3' nucleotides from tRNA precursor, generating 3' termini of tRNAs. A 3'-hydroxy group is left at the tRNA terminus and a 5'-phosphoryl group is left at the trailer molecule.. Functionally, zinc phosphodiesterase, which displays some tRNA 3'-processing endonuclease activity. Probably involved in tRNA maturation, by removing a 3'-trailer from precursor tRNA. The sequence is that of Ribonuclease Z from Borreliella afzelii (strain PKo) (Borrelia afzelii).